Here is a 70-residue protein sequence, read N- to C-terminus: Large ribosomal subunit protein bL31 (70 aa).

Zn(2+) is bound by residues Cys-16, Cys-18, Cys-37, and Cys-40.

This sequence belongs to the bacterial ribosomal protein bL31 family. Type A subfamily. Part of the 50S ribosomal subunit. Zn(2+) serves as cofactor.

In terms of biological role, binds the 23S rRNA. This chain is Large ribosomal subunit protein bL31, found in Shewanella baltica (strain OS223).